A 157-amino-acid chain; its full sequence is MSSAICPCGSGDLLLACCGHYHAGQPAPCAEKLMRSRYSAYVLGLTDYLVQTTLPVQQAALDREAIAQWSAQSTWLGLEVESAEVLGGKPEHAFVTFTARWHDGNGEHSHKERSSFVQNQGHWYFIDSTVPLKAGRNDGCPCGSEQKFKKCCSAYVI.

Belongs to the UPF0225 family.

In Pseudomonas syringae pv. tomato (strain ATCC BAA-871 / DC3000), this protein is UPF0225 protein PSPTO_4127.